Here is a 547-residue protein sequence, read N- to C-terminus: MPILSLHNMHDKVLILDFGSQVTQLIARRVREAHVYCEIHPNDVSDAFVREFAPKAIILSGSHASTYEDQDLRAPQAVWDLGVPVLGICYGMFAMTVQQGGKVEASAHREFGYAEVRAHGHTRLLDSIEDFRTPEGHGMLKVWMSHGDKVTEMPPGFKLMASTPSCPIAGMADEARGYYAVQFHPEVTHTVQGRALLERFVLEIAGAKPDWIMRDHIEEAVKSIREQVGDEEVILGLSGGVDSSVAAALIHRAIGDQLTCVFVDHGLLRLNEGQMVLDMFEGRLHAKVVHVDASEQFLGHLTGVTDPEAKRKIIGREFVEVFQAEAKTLTNAKWLAQGTIYPDVIESGGAKTKKATTIKSHHNVGGLPETLGLKLLEPLRDLFKDEVRELGVALGLPPEMVYRHPFPGPGLGVRILGEVKREYADLLRRADAIFIEELRGTKATAQDAVAGLCTEDQVGKSWYDLTSQAFAVFLPVKSVGVMGDGRTYDYVVALRAVQTTDFMTAHWAHLPYALLGRVSNRIINEVRGINRVVYDVSGKPPATIEWE.

A Glutamine amidotransferase type-1 domain is found at 12-210 (KVLILDFGSQ…VLEIAGAKPD (199 aa)). C89 (nucleophile) is an active-site residue. Catalysis depends on residues H184 and E186. Residues 211–403 (WIMRDHIEEA…LGLPPEMVYR (193 aa)) enclose the GMPS ATP-PPase domain. 238 to 244 (SGGVDSS) contributes to the ATP binding site.

As to quaternary structure, homodimer.

It catalyses the reaction XMP + L-glutamine + ATP + H2O = GMP + L-glutamate + AMP + diphosphate + 2 H(+). Its pathway is purine metabolism; GMP biosynthesis; GMP from XMP (L-Gln route): step 1/1. Its function is as follows. Catalyzes the synthesis of GMP from XMP. The chain is GMP synthase [glutamine-hydrolyzing] from Ralstonia nicotianae (strain ATCC BAA-1114 / GMI1000) (Ralstonia solanacearum).